Here is a 136-residue protein sequence, read N- to C-terminus: Single-stranded DNA-binding protein 1 (136 aa).

The SSB domain occupies 4-109; sequence LNKMQLIGNL…IMAKEMQMLG (106 aa). The segment at 109–136 is disordered; the sequence is GKKQDNNKVGNARHGDALPADEDDYYDF. A compositionally biased stretch (acidic residues) spans 127–136; the sequence is PADEDDYYDF.

Homotetramer.

This Xylella fastidiosa (strain 9a5c) protein is Single-stranded DNA-binding protein 1 (ssb1).